Reading from the N-terminus, the 1543-residue chain is DNA-directed RNA polymerase subunit beta' (1543 aa).

Zn(2+)-binding residues include Cys60, Cys62, Cys75, and Cys78. The Mg(2+) site is built by Asp627, Asp629, and Asp631. Zn(2+)-binding residues include Cys1017, Cys1097, Cys1104, and Cys1107. 2 disordered regions span residues Pro1466 to Arg1490 and Ala1522 to Val1543.

This sequence belongs to the RNA polymerase beta' chain family. As to quaternary structure, the RNAP catalytic core consists of 2 alpha, 1 beta, 1 beta' and 1 omega subunit. When a sigma factor is associated with the core the holoenzyme is formed, which can initiate transcription. Requires Mg(2+) as cofactor. It depends on Zn(2+) as a cofactor.

It carries out the reaction RNA(n) + a ribonucleoside 5'-triphosphate = RNA(n+1) + diphosphate. In terms of biological role, DNA-dependent RNA polymerase catalyzes the transcription of DNA into RNA using the four ribonucleoside triphosphates as substrates. The polypeptide is DNA-directed RNA polymerase subunit beta' (Herpetosiphon aurantiacus (strain ATCC 23779 / DSM 785 / 114-95)).